The primary structure comprises 352 residues: Farnesyl pyrophosphate synthase (352 aa).

Positions 52, 55, and 93 each coordinate isopentenyl diphosphate. Mg(2+) is bound by residues D100 and D104. R109 is a dimethylallyl diphosphate binding site. R110 contacts isopentenyl diphosphate. 5 residues coordinate dimethylallyl diphosphate: K197, T198, Q237, K254, and K263.

It belongs to the FPP/GGPP synthase family. Mg(2+) is required as a cofactor.

The catalysed reaction is isopentenyl diphosphate + dimethylallyl diphosphate = (2E)-geranyl diphosphate + diphosphate. It catalyses the reaction isopentenyl diphosphate + (2E)-geranyl diphosphate = (2E,6E)-farnesyl diphosphate + diphosphate. It functions in the pathway isoprenoid biosynthesis; farnesyl diphosphate biosynthesis; farnesyl diphosphate from geranyl diphosphate and isopentenyl diphosphate: step 1/1. It participates in isoprenoid biosynthesis; geranyl diphosphate biosynthesis; geranyl diphosphate from dimethylallyl diphosphate and isopentenyl diphosphate: step 1/1. Its function is as follows. Farnesyl pyrophosphate synthase; part of the second module of ergosterol biosynthesis pathway that includes the middle steps of the pathway. ERG20 catalyzes the sequential condensation of isopentenyl pyrophosphate with dimethylallyl pyrophosphate, and then with the resultant geranylpyrophosphate to the ultimate product farnesyl pyrophosphate. The second module is carried out in the vacuole and involves the formation of farnesyl diphosphate, which is also an important intermediate in the biosynthesis of ubiquinone, dolichol, heme and prenylated proteins. Activity by the mevalonate kinase ERG12 first converts mevalonate into 5-phosphomevalonate. 5-phosphomevalonate is then further converted to 5-diphosphomevalonate by the phosphomevalonate kinase ERG8. The diphosphomevalonate decarboxylase MVD1/ERG19 then produces isopentenyl diphosphate. The isopentenyl-diphosphate delta-isomerase IDI1 then catalyzes the 1,3-allylic rearrangement of the homoallylic substrate isopentenyl (IPP) to its highly electrophilic allylic isomer, dimethylallyl diphosphate (DMAPP). Finally the farnesyl diphosphate synthase ERG20 catalyzes the sequential condensation of isopentenyl pyrophosphate with dimethylallyl pyrophosphate, and then with the resultant geranylpyrophosphate to the ultimate product farnesyl pyrophosphate. The chain is Farnesyl pyrophosphate synthase (ERG20) from Saccharomyces cerevisiae (strain ATCC 204508 / S288c) (Baker's yeast).